The primary structure comprises 328 residues: RNA 3'-terminal phosphate cyclase (328 aa).

ATP is bound by residues Gln100 and 276–280 (HLADQ). The active-site Tele-AMP-histidine intermediate is the His302.

The protein belongs to the RNA 3'-terminal cyclase family. Type 1 subfamily.

The protein resides in the cytoplasm. The enzyme catalyses a 3'-end 3'-phospho-ribonucleotide-RNA + ATP = a 3'-end 2',3'-cyclophospho-ribonucleotide-RNA + AMP + diphosphate. Functionally, catalyzes the conversion of 3'-phosphate to a 2',3'-cyclic phosphodiester at the end of RNA. The mechanism of action of the enzyme occurs in 3 steps: (A) adenylation of the enzyme by ATP; (B) transfer of adenylate to an RNA-N3'P to produce RNA-N3'PP5'A; (C) and attack of the adjacent 2'-hydroxyl on the 3'-phosphorus in the diester linkage to produce the cyclic end product. The biological role of this enzyme is unknown but it is likely to function in some aspects of cellular RNA processing. This chain is RNA 3'-terminal phosphate cyclase (rtcA), found in Archaeoglobus fulgidus (strain ATCC 49558 / DSM 4304 / JCM 9628 / NBRC 100126 / VC-16).